Here is a 214-residue protein sequence, read N- to C-terminus: Probable transaldolase (214 aa).

K83 (schiff-base intermediate with substrate) is an active-site residue.

The protein belongs to the transaldolase family. Type 3B subfamily.

The protein localises to the cytoplasm. It carries out the reaction D-sedoheptulose 7-phosphate + D-glyceraldehyde 3-phosphate = D-erythrose 4-phosphate + beta-D-fructose 6-phosphate. It functions in the pathway carbohydrate degradation; pentose phosphate pathway; D-glyceraldehyde 3-phosphate and beta-D-fructose 6-phosphate from D-ribose 5-phosphate and D-xylulose 5-phosphate (non-oxidative stage): step 2/3. In terms of biological role, transaldolase is important for the balance of metabolites in the pentose-phosphate pathway. The chain is Probable transaldolase from Geobacter metallireducens (strain ATCC 53774 / DSM 7210 / GS-15).